Reading from the N-terminus, the 418-residue chain is Nucleoside permease NupG (418 aa).

The Cytoplasmic segment spans residues 1-4 (MNLK). Residues 5 to 29 (LQLKILSFLQFCLWGSWLTTLGSYM) form a helical membrane-spanning segment. Residues 30 to 36 (FVTLKFD) lie on the Periplasmic side of the membrane. The chain crosses the membrane as a helical span at residues 37-58 (GASIGAVYSSLGIAAVFMPALL). Over 59–67 (GIVADKWLS) the chain is Cytoplasmic. A helical membrane pass occupies residues 68–88 (AKWVYAICHTIGAITLFMAAQ). At 89 to 91 (VTT) the chain is on the periplasmic side. Residues 92–113 (PEAMFLVILINSFAYMPTLGLI) form a helical membrane-spanning segment. Residues 114–135 (NTISYYRLQNAGMDIVTDFPPI) are Cytoplasmic-facing. Residues 136 to 156 (RIWGTIGFIMAMWVVSLSGFE) traverse the membrane as a helical segment. The Periplasmic segment spans residues 157–158 (LS). A helical membrane pass occupies residues 159–178 (HMQLYIGAALSAILVLFTLT). At 179–209 (LPHIPVAKQQANQSWTTLLGLDAFALFKNKR) the chain is on the cytoplasmic side. Residues 210 to 236 (MAIFFIFSMLLGAELQITNMFGNTFLH) form a helical membrane-spanning segment. The Periplasmic portion of the chain corresponds to 237–247 (SFDKDPMFASS). Residues 248 to 268 (FIVQHASIIMSISQISETLFI) traverse the membrane as a helical segment. Topologically, residues 269 to 280 (LTIPFFLSRYGI) are cytoplasmic. Residues 281–300 (KNVMMISIVAWILRFALFAY) form a helical membrane-spanning segment. Residues 301-305 (GDPTP) are Periplasmic-facing. The helical transmembrane segment at 306–326 (FGTVLLVLSMIVYGCAFDFFN) threads the bilayer. Residues 327–346 (ISGSVFVEKEVSPAIRASAQ) are Cytoplasmic-facing. Residues 347–369 (GMFLMMTNGFGCILGGIVSGKVV) form a helical membrane-spanning segment. Residues 370–379 (EMYTQNGITD) lie on the Periplasmic side of the membrane. A helical transmembrane segment spans residues 380–403 (WQTVWLIFAGYSVVLAFAFMAMFK). Residues 404–418 (YKHVRVPTGTQTVSH) lie on the Cytoplasmic side of the membrane.

This sequence belongs to the major facilitator superfamily. Nucleoside:H(+) symporter (NHS) (TC 2.A.1.10) family.

Its subcellular location is the cell inner membrane. The enzyme catalyses adenosine(in) + H(+)(in) = adenosine(out) + H(+)(out). The catalysed reaction is uridine(in) + H(+)(in) = uridine(out) + H(+)(out). It carries out the reaction thymidine(in) + H(+)(in) = thymidine(out) + H(+)(out). It catalyses the reaction cytidine(in) + H(+)(in) = cytidine(out) + H(+)(out). The enzyme catalyses 2'-deoxycytidine(in) + H(+)(in) = 2'-deoxycytidine(out) + H(+)(out). The catalysed reaction is guanosine(in) + H(+)(in) = guanosine(out) + H(+)(out). It carries out the reaction inosine(in) + H(+)(in) = inosine(out) + H(+)(out). Inhibited by the protonophore uncouplers 2,4-dinitrophenol and carbonyl cyanide m-chlorophenylhydrazone (CCCP), and by valinomycin. Inhibited by the nucleoside antibiotic showdomycin. Its function is as follows. Broad-specificity transporter of purine and pyrimidine nucleosides. Can transport adenosine, uridine, thymidine, cytidine, deoxycytidine, guanosine and inosine. Can also transport xanthosine, but with a very low affinity. Transport is driven by a proton motive force. The protein is Nucleoside permease NupG of Escherichia coli (strain K12).